A 341-amino-acid polypeptide reads, in one-letter code: MSDPTQKIAVLGAGSWGTALAALVARHGHPTVLWGRDAAMVDAIDRTHENPRYLPGIALPDSLRATTDLQQTIAGASWILVVVPSHAFTETIKLLAPLRPAGAGIAWATKGFEPGSGRFLHEVARDILGPSVPLAVVTGPSFAKEVTLGLPTAITVHGDDAAFAQVVADAMHGPTFRAYTGDDMVGAELGGAMKNVLAVATGVADGMQLGLNARAGLITRGLNEMLRLAAVIGARPETLMGLAGLGDLVLTCTGDLSRNRRLGLALGRGQSLSDAIREIGQVVESVQTADEVMRQAEQHGIELPISNAVRAVLHGEITPEAGLKELLARERKPEYPQTLFT.

NADPH is bound by residues serine 15, tryptophan 16, arginine 36, and lysine 110. Sn-glycerol 3-phosphate-binding residues include lysine 110, glycine 139, and serine 141. Alanine 143 provides a ligand contact to NADPH. Sn-glycerol 3-phosphate contacts are provided by lysine 194, aspartate 247, serine 257, arginine 258, and asparagine 259. Lysine 194 functions as the Proton acceptor in the catalytic mechanism. An NADPH-binding site is contributed by arginine 258. 2 residues coordinate NADPH: valine 282 and glutamate 284.

Belongs to the NAD-dependent glycerol-3-phosphate dehydrogenase family.

Its subcellular location is the cytoplasm. The enzyme catalyses sn-glycerol 3-phosphate + NAD(+) = dihydroxyacetone phosphate + NADH + H(+). It carries out the reaction sn-glycerol 3-phosphate + NADP(+) = dihydroxyacetone phosphate + NADPH + H(+). Its pathway is membrane lipid metabolism; glycerophospholipid metabolism. Its function is as follows. Catalyzes the reduction of the glycolytic intermediate dihydroxyacetone phosphate (DHAP) to sn-glycerol 3-phosphate (G3P), the key precursor for phospholipid synthesis. In Xanthomonas campestris pv. campestris (strain 8004), this protein is Glycerol-3-phosphate dehydrogenase [NAD(P)+].